We begin with the raw amino-acid sequence, 178 residues long: Alkyl hydroperoxide reductase AhpD (178 aa).

The active-site Proton donor is cysteine 131. Residues cysteine 131 and cysteine 134 are joined by a disulfide bond. Cysteine 134 (cysteine sulfenic acid (-SOH) intermediate) is an active-site residue.

The protein belongs to the AhpD family.

The catalysed reaction is N(6)-[(R)-dihydrolipoyl]-L-lysyl-[lipoyl-carrier protein] + a hydroperoxide = N(6)-[(R)-lipoyl]-L-lysyl-[lipoyl-carrier protein] + an alcohol + H2O. Functionally, antioxidant protein with alkyl hydroperoxidase activity. Required for the reduction of the AhpC active site cysteine residues and for the regeneration of the AhpC enzyme activity. The chain is Alkyl hydroperoxide reductase AhpD from Methylocella silvestris (strain DSM 15510 / CIP 108128 / LMG 27833 / NCIMB 13906 / BL2).